Reading from the N-terminus, the 311-residue chain is Short chain dehydrogenase opdN (311 aa).

NADP(+)-binding residues include L48, K73, E96, N123, Y217, and K221. Y217 (proton donor) is an active-site residue. K221 functions as the Lowers pKa of active site Tyr in the catalytic mechanism.

Belongs to the short-chain dehydrogenases/reductases (SDR) family.

It participates in secondary metabolite biosynthesis. Functionally, short chain dehydrogenase; part of the gene cluster that mediates the biosynthesis of oxopyrrolidines, polyketide-amino acid hybrid compounds with feature structures of tetramic acid. Does not seem to play a role in oxopyrrolidines A and B biosynthesis. May be involved in further modifications of these oxopyrrolidines. This is Short chain dehydrogenase opdN from Penicillium oxalicum (strain 114-2 / CGMCC 5302) (Penicillium decumbens).